Consider the following 788-residue polypeptide: Elongator complex protein 2 (788 aa).

WD repeat units lie at residues 13–51 (GANK…NKGV), 57–96 (GHEA…HLQC), 102–139 (HYSK…DEFG), 200–243 (GHED…LIDD), 279–318 (GHDD…GIWV), 336–377 (GSSG…ICDQ), 383–422 (GATK…ASGR), and 437–475 (IHGY…AGML). The interval 490–530 (PDSATVPVLGLSNKAGEDDANEDDEEEEGGNKETPDITDPL) is disordered. Ser492 bears the Phosphoserine mark. Over residues 507–517 (DDANEDDEEEE) the composition is skewed to acidic residues. WD repeat units follow at residues 556-600 (GHGF…EIKP), 604-643 (FHSL…NTFE), 651-692 (PHTR…ADDY), 699-742 (KHTK…FELI), and 750-788 (TPAD…LAYE).

Belongs to the WD repeat ELP2 family. In terms of assembly, component of the elongator complex which consists of ELP1/IKI3, ELP2, ELP3, ELP4, ELP5/IKI1 and ELP6. The elongator complex is composed of two copies of the Elp123 subcomplex (composed of ELP1/IKI3, ELP2 and ELP3) and two copies of the Elp456 subcomplex (composed of ELP4, ELP5/IKI1 and ELP6). The Elp123 subcomplex forms a two-lobed scaffold, which binds the Elp456 subcomplex asymmetrically. In the complex, ELP2 interacts with ELP1/IKI3. In each lobe, ELP2 is tightly sandwiched between ELP1/IKI3 and ELP3. The Elp123 subcomplex binds tRNA through ELP1/IKI3 and ELP3 and can bind 2 tRNAs simultaneously. tRNA-binding induces conformational rearrangements which precisely position the targeted anticodon base in the active site. The Elp456 subcomplex binds tRNA and has ATPase activity. Interacts with KTI11/DPH3.

The protein localises to the cytoplasm. It is found in the nucleus. It participates in tRNA modification; 5-methoxycarbonylmethyl-2-thiouridine-tRNA biosynthesis. Component of the elongator complex, a multiprotein complex which is required for multiple tRNA modifications, including mcm5U (5-methoxycarbonylmethyl uridine), mcm5s2U (5-methoxycarbonylmethyl-2-thiouridine), and ncm5U (5-carbamoylmethyl uridine). The elongator complex catalyzes formation of carboxymethyluridine in the wobble base at position 34 in tRNAs. It functions as a gamma-toxin target (TOT); disruption of the complex confers resistance to Kluyveromyces lactis toxin zymocin (pGKL1 killer toxin). May also be involved in sensitivity to Pichia inositovora toxin. ELP2 binds to microtubules. Independently, ELP2 may be involved in polarized exocytosis. The protein is Elongator complex protein 2 (ELP2) of Saccharomyces cerevisiae (strain ATCC 204508 / S288c) (Baker's yeast).